Consider the following 2528-residue polypeptide: Squalestatin tetraketide synthase clz2 (2528 aa).

A Ketosynthase family 3 (KS3) domain is found at 14-409; the sequence is TVPIAIVGMS…GANAHVILES (396 aa). Residues C187, H291, and H331 each act as for beta-ketoacyl synthase activity in the active site. The segment at 420 to 457 is disordered; it reads VNGHHQKNGTTNGHKGANGTTNELNGTNGTANGHDITT. Residues 436-452 show a composition bias toward low complexity; sequence ANGTTNELNGTNGTANG. A malonyl-CoA:ACP transacylase (MAT) domain region spans residues 538–856; that stretch reads GAQWFAMGRE…PYLSCLLRGQ (319 aa). Positions 925–1063 are N-terminal hotdog fold; it reads HDLLGSLIPG…GRIAIELDTS (139 aa). The region spanning 925–1239 is the PKS/mFAS DH domain; it reads HDLLGSLIPG…NQSVGQIALQ (315 aa). Residues 925-1239 form a dehydratase (DH) domain region; sequence HDLLGSLIPG…NQSVGQIALQ (315 aa). Catalysis depends on H957, which acts as the Proton acceptor; for dehydratase activity. Residues 1083 to 1239 form a C-terminal hotdog fold region; it reads TRSVDPSNLY…NQSVGQIALQ (157 aa). D1148 serves as the catalytic Proton donor; for dehydratase activity. The methyltransferase (CMet) domain stretch occupies residues 1390-1590; sequence LYRYYTDAIK…GLDVELRDCD (201 aa). Residues 1817–2130 form an enoyl reductase (ER) (ER) domain region; sequence GLIDTLQFSK…AGKHMGKIVI (314 aa). Residues 2153–2331 are ketoreductase (KR) domain; it reads ASYLIVGGLG…AVSIDLGMVQ (179 aa). Positions 2408–2430 are disordered; that stretch reads RARDAKEQSNSQGGGTDSKISPG. The Carrier domain maps to 2441-2518; the sequence is EAIDVVGRAI…ALATTVATKS (78 aa). Position 2478 is an O-(pantetheine 4'-phosphoryl)serine (S2478).

It functions in the pathway secondary metabolite biosynthesis. Functionally, highly reducing polyketide synthase (HR-PKS); part of the gene cluster that mediates the biosynthesis of squalestatin S1 (SQS1, also known as zaragozic acid A), a heavily oxidized fungal polyketide that offers potent cholesterol lowering activity by targeting squalene synthase (SS). SQS1 is composed of a 2,8-dioxobicyclic[3.2.1]octane-3,4,5-tricarboxyclic acid core that is connected to two lipophilic polyketide arms. These initial steps feature the priming of an unusual benzoic acid starter unit onto the highly reducing polyketide synthase clz14, followed by oxaloacetate extension and product release to generate a tricarboxylic acid containing product. The phenylalanine ammonia lyase (PAL) clz10 and the acyl-CoA ligase clz12 are involved in transforming phenylalanine into benzoyl-CoA. The citrate synthase-like protein clz17 is involved in connecting the C-alpha-carbons of the hexaketide chain and oxaloacetate to afford the tricarboxylic acid unit. The potential hydrolytic enzymes, clz11 and clz13, are in close proximity to pks2 and may participate in product release. On the other side, the tetraketide arm is synthesized by a the squalestatin tetraketide synthase clz2 and enzymatically esterified to the core in the last biosynthetic step, by the acetyltransferase clz6. The biosynthesis of the tetraketide must involve 3 rounds of chain extension. After the first and second rounds methyl-transfer occurs, and in all rounds of extension the ketoreductase and dehydratase are active. The enoyl reductase and C-MeT of clz2 are not active in the final round of extension. The acetyltransferase clz6 appears to have a broad substrate selectivity for its acyl CoA substrate, allowing the in vitro synthesis of novel squalestatins. The biosynthesis of SQS1 requires several oxidative steps likely performed by oxidoreductases clz3, clz15 and clz16. Finally, in support of the identification of the cluster as being responsible for SQS1 production, the cluster contains a gene encoding a putative squalene synthase (SS) clz20, suggesting a likely mechanism for self-resistance. In Cochliobolus lunatus (Filamentous fungus), this protein is Squalestatin tetraketide synthase clz2.